A 454-amino-acid chain; its full sequence is UPF0210 protein BLA_0552 (454 aa).

The protein belongs to the UPF0210 family. As to quaternary structure, homodimer.

The protein is UPF0210 protein BLA_0552 of Bifidobacterium animalis subsp. lactis (strain AD011).